Here is a 210-residue protein sequence, read N- to C-terminus: Proteasome subunit beta (210 aa).

The propeptide at 1–10 (MKELDQLTKG) is removed in mature form; by autocatalysis. Thr11 functions as the Nucleophile in the catalytic mechanism.

It belongs to the peptidase T1B family. In terms of assembly, the 20S proteasome core is composed of 14 alpha and 14 beta subunits that assemble into four stacked heptameric rings, resulting in a barrel-shaped structure. The two inner rings, each composed of seven catalytic beta subunits, are sandwiched by two outer rings, each composed of seven alpha subunits. The catalytic chamber with the active sites is on the inside of the barrel. Has a gated structure, the ends of the cylinder being occluded by the N-termini of the alpha-subunits. Is capped at one or both ends by the proteasome regulatory ATPase, PAN.

The protein localises to the cytoplasm. The enzyme catalyses Cleavage of peptide bonds with very broad specificity.. With respect to regulation, the formation of the proteasomal ATPase PAN-20S proteasome complex, via the docking of the C-termini of PAN into the intersubunit pockets in the alpha-rings, triggers opening of the gate for substrate entry. Interconversion between the open-gate and close-gate conformations leads to a dynamic regulation of the 20S proteasome proteolysis activity. Component of the proteasome core, a large protease complex with broad specificity involved in protein degradation. This chain is Proteasome subunit beta, found in Methanopyrus kandleri (strain AV19 / DSM 6324 / JCM 9639 / NBRC 100938).